A 414-amino-acid polypeptide reads, in one-letter code: Enterobactin exporter EntS (414 aa).

Topologically, residues 1 to 21 are cytoplasmic; sequence MNRQSWLLNLSLLKTHPAFRA. The helical transmembrane segment at 22–42 threads the bilayer; that stretch reads VFLARFISIVSLGLLGVAVPV. Residues 43–55 lie on the Periplasmic side of the membrane; it reads QIQMMTHSTWQVG. The helical transmembrane segment at 56–76 threads the bilayer; sequence LSVTLTGGAMFIGLMVGGVLA. Residues 77–83 lie on the Cytoplasmic side of the membrane; that stretch reads DRYERKK. A helical transmembrane segment spans residues 84–104; the sequence is VILLARGTCGIGFIGLCVNAL. Over 105-109 the chain is Periplasmic; the sequence is LPEPS. Residues 110–130 traverse the membrane as a helical segment; sequence LLAIYLLGLWDGFFASLGVTA. At 131-156 the chain is on the cytoplasmic side; the sequence is LLAATPALVGRENLMQAGAITMLTVR. A helical transmembrane segment spans residues 157–177; that stretch reads LGSVISPMLGGILLASGGVAW. Position 178 (N178) is a topological domain, periplasmic. The helical transmembrane segment at 179–199 threads the bilayer; the sequence is YGLAAAGTFITLLPLLTLPRL. The Cytoplasmic segment spans residues 200–218; sequence PVPPQPRENPFIALLAAFR. A helical transmembrane segment spans residues 219–239; sequence FLLASPLIGGIALLGGLVTMA. Over 240 to 256 the chain is Periplasmic; that stretch reads SAVRVLYPALAMSWQMS. The chain crosses the membrane as a helical span at residues 257–277; it reads AAQIGLLYAAIPLGAAIGALT. The Cytoplasmic portion of the chain corresponds to 278–287; that stretch reads SGQLAHSVRP. A helical membrane pass occupies residues 288-307; that stretch reads GLIMLVSTVGSFLAVGLFAI. Residues 308–313 are Periplasmic-facing; it reads MPIWIA. A helical membrane pass occupies residues 314–336; the sequence is GVICLALFGWLSAISSLLQYTLL. Over 337-356 the chain is Cytoplasmic; it reads QTQTPENMLGRMNGLWTAQN. A helical transmembrane segment spans residues 357–377; the sequence is VTGDAIGAALLGGLGAMMTPV. A topological domain (periplasmic) is located at residue A378. The helical transmembrane segment at 379 to 399 threads the bilayer; it reads SASVSGFGLVIIGLLLLLVLG. Residues 400-414 lie on the Cytoplasmic side of the membrane; that stretch reads ELRRFRQTPPVSDAG.

This sequence belongs to the major facilitator superfamily. EntS (TC 2.A.1.38) family.

It localises to the cell inner membrane. In terms of biological role, component of an export pathway for enterobactin. This is Enterobactin exporter EntS from Salmonella typhi.